The chain runs to 238 residues: 2-C-methyl-D-erythritol 4-phosphate cytidylyltransferase (238 aa).

This sequence belongs to the IspD/TarI cytidylyltransferase family. IspD subfamily.

It carries out the reaction 2-C-methyl-D-erythritol 4-phosphate + CTP + H(+) = 4-CDP-2-C-methyl-D-erythritol + diphosphate. The protein operates within isoprenoid biosynthesis; isopentenyl diphosphate biosynthesis via DXP pathway; isopentenyl diphosphate from 1-deoxy-D-xylulose 5-phosphate: step 2/6. Functionally, catalyzes the formation of 4-diphosphocytidyl-2-C-methyl-D-erythritol from CTP and 2-C-methyl-D-erythritol 4-phosphate (MEP). The polypeptide is 2-C-methyl-D-erythritol 4-phosphate cytidylyltransferase (Aliivibrio fischeri (strain ATCC 700601 / ES114) (Vibrio fischeri)).